Here is a 242-residue protein sequence, read N- to C-terminus: Uridylate kinase (242 aa).

16–19 (KVSG) provides a ligand contact to ATP. Gly-58 is a binding site for UMP. Residues Gly-59 and Arg-63 each coordinate ATP. Residues Asp-78 and 139 to 146 (TGNPFCTT) each bind UMP. ATP is bound by residues Thr-166, Gln-167, Tyr-172, and Asp-175.

Belongs to the UMP kinase family. Homohexamer.

The protein resides in the cytoplasm. It catalyses the reaction UMP + ATP = UDP + ADP. It functions in the pathway pyrimidine metabolism; CTP biosynthesis via de novo pathway; UDP from UMP (UMPK route): step 1/1. Inhibited by UTP. In terms of biological role, catalyzes the reversible phosphorylation of UMP to UDP. This Rickettsia massiliae (strain Mtu5) protein is Uridylate kinase.